We begin with the raw amino-acid sequence, 452 residues long: UPF0761 membrane protein Bpet3042 (452 aa).

A run of 6 helical transmembrane segments spans residues 56-76 (VLGIVPMLAVVLSLFTAFPVF), 114-134 (LTAIGGAFLVVTSLLLIMTID), 153-173 (ALVYWAVVTLGPVVAGASLWA), 195-215 (AISFLPLILTGLGFAALFVVV), 225-245 (ALVGGFGTAIVLELMKAAFAY), and 259-279 (AFATLPIFLLWIYLSWLAVLF).

It belongs to the UPF0761 family.

It is found in the cell inner membrane. The sequence is that of UPF0761 membrane protein Bpet3042 from Bordetella petrii (strain ATCC BAA-461 / DSM 12804 / CCUG 43448).